Reading from the N-terminus, the 1037-residue chain is Probable aminoglycoside efflux pump (1037 aa).

Over 1 to 9 (MANFFIDRP) the chain is Cytoplasmic. A helical membrane pass occupies residues 10–28 (IFAWVLAILLCLTGTLAIF). Residues 29-339 (SLPVEQYPDL…TSFVKASIED (311 aa)) lie on the Periplasmic side of the membrane. The helical transmembrane segment at 340–359 (VVKTLLEAIALVFLVMYLFL) threads the bilayer. The Cytoplasmic segment spans residues 360–365 (QNFRAT). A helical membrane pass occupies residues 366–385 (LIPTIAVPVVLMGTFSVLYA). Residues 386–391 (FGYSVN) lie on the Periplasmic side of the membrane. A helical transmembrane segment spans residues 392–413 (TLTMFAMVLAIGLLVDDAIVVV). The Cytoplasmic portion of the chain corresponds to 414 to 441 (ENVERIMSEEGLTPREATRKSMGQIQGA). A helical membrane pass occupies residues 442–460 (LVGIAMVLSAVFVPMAFFG). Over 461–473 (GTTGAIYRQFSIT) the chain is Periplasmic. The helical transmembrane segment at 474–496 (IVAAMVLSVLVAMILTPALCATL) threads the bilayer. At 497 to 537 (LKPLKKGEHHGQKGFFAWFNQMFNRNAERYEKGVAKILHRS) the chain is on the cytoplasmic side. A helical transmembrane segment spans residues 538-556 (LRWIVIYVLLLGGMVFLFL). The Periplasmic segment spans residues 557–870 (RLPTSFLPLE…SYQERLSGAQ (314 aa)). A helical transmembrane segment spans residues 871–890 (APALYAISLLVVFLCLAALY). The Cytoplasmic portion of the chain corresponds to 891-896 (ESWSVP). The chain crosses the membrane as a helical span at residues 897 to 916 (FSVMLVVPLGVIGALLATWM). The Periplasmic segment spans residues 917–922 (RGLEND). Residues 923–944 (VYFQVGLLTVIGLSAKNAILIV) traverse the membrane as a helical segment. Residues 945–971 (EFANEMNQKGHDLFEATLHACRQRLRP) lie on the Cytoplasmic side of the membrane. Residues 972-990 (ILMTSLAFIFGVLPMATST) form a helical membrane-spanning segment. Over 991–1003 (GAGSGGQHAVGTG) the chain is Periplasmic. The helical transmembrane segment at 1004 to 1026 (VMGGMISATILAIYFVPLFFVLV) threads the bilayer. Over 1027–1037 (RRRFPLKPRPE) the chain is Cytoplasmic.

Belongs to the resistance-nodulation-cell division (RND) (TC 2.A.6) family.

It is found in the cell inner membrane. Functionally, participates in the efflux of aminoglycosides. Confers resistance to a variety of these substances. This chain is Probable aminoglycoside efflux pump (acrD), found in Escherichia coli (strain K12).